The primary structure comprises 97 residues: Large ribosomal subunit protein eL21 (97 aa).

This sequence belongs to the eukaryotic ribosomal protein eL21 family.

In Methanococcus vannielii (strain ATCC 35089 / DSM 1224 / JCM 13029 / OCM 148 / SB), this protein is Large ribosomal subunit protein eL21.